Consider the following 877-residue polypeptide: Probable alpha/beta-glucosidase agdC (877 aa).

The first 14 residues, 1–14, serve as a signal peptide directing secretion; it reads MLGSLLLLAPLAGA. Asparagine 171, asparagine 293, and asparagine 373 each carry an N-linked (GlcNAc...) asparagine glycan. The active-site Nucleophile is aspartate 422. Residue glutamate 425 is part of the active site. Residues 432-476 form a disordered region; sequence DPCTDPERYSSENNLPPAPPPVRSSSPRPLPGFPADFQPSSASRS. A compositionally biased stretch (pro residues) spans 447–463; that stretch reads PPAPPPVRSSSPRPLPG. N-linked (GlcNAc...) asparagine glycosylation is present at asparagine 508. The active-site Proton donor is aspartate 573. 3 N-linked (GlcNAc...) asparagine glycosylation sites follow: asparagine 574, asparagine 610, and asparagine 744.

This sequence belongs to the glycosyl hydrolase 31 family.

The protein localises to the secreted. It carries out the reaction Hydrolysis of terminal, non-reducing (1-&gt;4)-linked alpha-D-glucose residues with release of alpha-D-glucose.. It catalyses the reaction Hydrolysis of terminal, non-reducing beta-D-glucosyl residues with release of beta-D-glucose.. Functionally, glucosidase involved in the degradation of cellulosic biomass. Has both alpha- and beta-glucosidase activity. This is Probable alpha/beta-glucosidase agdC (agdC) from Aspergillus flavus (strain ATCC 200026 / FGSC A1120 / IAM 13836 / NRRL 3357 / JCM 12722 / SRRC 167).